Consider the following 454-residue polypeptide: tRNA modification GTPase MnmE (454 aa).

Arginine 23, glutamate 80, and lysine 120 together coordinate (6S)-5-formyl-5,6,7,8-tetrahydrofolate. The TrmE-type G domain occupies 216–377 (GMKVVIAGRP…LRDHLKQSMG (162 aa)). Asparagine 226 serves as a coordination point for K(+). GTP is bound by residues 226 to 231 (NAGKSS), 245 to 251 (TDIAGTT), 270 to 273 (DTAG), 335 to 338 (NKAD), and 358 to 360 (SAR). Serine 230 provides a ligand contact to Mg(2+). 3 residues coordinate K(+): threonine 245, isoleucine 247, and threonine 250. A Mg(2+)-binding site is contributed by threonine 251. Lysine 454 contacts (6S)-5-formyl-5,6,7,8-tetrahydrofolate.

The protein belongs to the TRAFAC class TrmE-Era-EngA-EngB-Septin-like GTPase superfamily. TrmE GTPase family. As to quaternary structure, homodimer. Heterotetramer of two MnmE and two MnmG subunits. K(+) serves as cofactor.

Its subcellular location is the cytoplasm. Its function is as follows. Exhibits a very high intrinsic GTPase hydrolysis rate. Involved in the addition of a carboxymethylaminomethyl (cmnm) group at the wobble position (U34) of certain tRNAs, forming tRNA-cmnm(5)s(2)U34. In Yersinia pseudotuberculosis serotype O:1b (strain IP 31758), this protein is tRNA modification GTPase MnmE.